The primary structure comprises 293 residues: 4-diphosphocytidyl-2-C-methyl-D-erythritol kinase (293 aa).

Lysine 16 is an active-site residue. 99-109 (PMGAGLGGGSS) is an ATP binding site. Residue aspartate 141 is part of the active site.

Belongs to the GHMP kinase family. IspE subfamily.

It catalyses the reaction 4-CDP-2-C-methyl-D-erythritol + ATP = 4-CDP-2-C-methyl-D-erythritol 2-phosphate + ADP + H(+). Its pathway is isoprenoid biosynthesis; isopentenyl diphosphate biosynthesis via DXP pathway; isopentenyl diphosphate from 1-deoxy-D-xylulose 5-phosphate: step 3/6. Its function is as follows. Catalyzes the phosphorylation of the position 2 hydroxy group of 4-diphosphocytidyl-2C-methyl-D-erythritol. The protein is 4-diphosphocytidyl-2-C-methyl-D-erythritol kinase of Burkholderia orbicola (strain MC0-3).